A 219-amino-acid chain; its full sequence is Redox-sensing transcriptional repressor Rex (219 aa).

Positions 17-56 form a DNA-binding region, H-T-H motif; the sequence is VYLRVLDNLVKRDIEVVSSKSLSKETGFTAEQIRKDLAFF. Residue 91-96 coordinates NAD(+); it reads GAGHLG.

This sequence belongs to the transcriptional regulatory Rex family. As to quaternary structure, homodimer.

It localises to the cytoplasm. Functionally, modulates transcription in response to changes in cellular NADH/NAD(+) redox state. The sequence is that of Redox-sensing transcriptional repressor Rex from Natranaerobius thermophilus (strain ATCC BAA-1301 / DSM 18059 / JW/NM-WN-LF).